A 380-amino-acid chain; its full sequence is Succinyl-diaminopimelate desuccinylase (380 aa).

His-69 lines the Zn(2+) pocket. The active site involves Asp-71. Asp-102 contacts Zn(2+). Residue Glu-135 is the Proton acceptor of the active site. The Zn(2+) site is built by Glu-136, Glu-164, and His-353.

This sequence belongs to the peptidase M20A family. DapE subfamily. In terms of assembly, homodimer. Zn(2+) is required as a cofactor. It depends on Co(2+) as a cofactor.

The enzyme catalyses N-succinyl-(2S,6S)-2,6-diaminopimelate + H2O = (2S,6S)-2,6-diaminopimelate + succinate. It functions in the pathway amino-acid biosynthesis; L-lysine biosynthesis via DAP pathway; LL-2,6-diaminopimelate from (S)-tetrahydrodipicolinate (succinylase route): step 3/3. Catalyzes the hydrolysis of N-succinyl-L,L-diaminopimelic acid (SDAP), forming succinate and LL-2,6-diaminopimelate (DAP), an intermediate involved in the bacterial biosynthesis of lysine and meso-diaminopimelic acid, an essential component of bacterial cell walls. The polypeptide is Succinyl-diaminopimelate desuccinylase (Phenylobacterium zucineum (strain HLK1)).